Consider the following 696-residue polypeptide: Methionine synthase reductase (696 aa).

The Flavodoxin-like domain maps to Phe4–Trp147. FMN is bound by residues Thr10–Gln14 and Leu93–Tyr124. The tract at residues Thr166–Pro245 is hinge. A phosphoserine mark is found at Ser171 and Ser188. Residues Asp269–Pro531 enclose the FAD-binding FR-type domain. Lys289 is a binding site for NADP(+). FAD is bound by residues Arg449–Ser452 and Gly485–Thr488. NADP(+)-binding positions include Ser608–Arg609, Tyr622–Gln624, and Asp657. Trp695 provides a ligand contact to FAD.

Forms a multiprotein complex with MMACHC, MMADHC and MTR. The cofactor is FAD. FMN serves as cofactor.

It is found in the cytoplasm. The enzyme catalyses 2 methylcob(III)alamin-[methionine synthase] + 2 S-adenosyl-L-homocysteine + NADP(+) + H(+) = 2 cob(II)alamin-[methionine synthase] + 2 S-adenosyl-L-methionine + NADPH. The catalysed reaction is 2 cob(II)alamin + A + 2 H2O + 2 H(+) = 2 aquacob(III)alamin + AH2. Functionally, key enzyme in methionine and folate homeostasis responsible for the reactivation of methionine synthase (MTR/MS) activity by catalyzing the reductive methylation of MTR-bound cob(II)alamin. Cobalamin (vitamin B12) forms a complex with MTR to serve as an intermediary in methyl transfer reactions that cycles between MTR-bound methylcob(III)alamin and MTR bound-cob(I)alamin forms, and occasional oxidative escape of the cob(I)alamin intermediate during the catalytic cycle leads to the inactive cob(II)alamin species. The processing of cobalamin in the cytosol occurs in a multiprotein complex composed of at least MMACHC, MMADHC, MTRR and MTR which may contribute to shuttle safely and efficiently cobalamin towards MTR in order to produce methionine. Also necessary for the utilization of methyl groups from the folate cycle, thereby affecting transgenerational epigenetic inheritance. Also acts as a molecular chaperone for methionine synthase by stabilizing apoMTR and incorporating methylcob(III)alamin into apoMTR to form the holoenzyme. Also serves as an aquacob(III)alamin reductase by reducing aquacob(III)alamin to cob(II)alamin; this reduction leads to stimulation of the conversion of apoMTR and aquacob(III)alamin to MTR holoenzyme. The chain is Methionine synthase reductase from Mus musculus (Mouse).